The sequence spans 615 residues: 9-cis-epoxycarotenoid dioxygenase NCED1, chloroplastic (615 aa).

Residues 1–41 (MPSPASNTWINTTLPSSCSSPFKDLASTSSSPTTLLPFKKR) constitute a chloroplast transit peptide. Disordered stretches follow at residues 20–45 (SPFK…SSSN) and 62–101 (YQPT…KQPF). Low complexity-rich tracts occupy residues 27–37 (STSSSPTTLLP) and 64–86 (PTST…TTTT). Positions 316, 365, and 430 each coordinate Fe cation. The stretch at 571–592 (KEWKSELQIVNAQNLKLEASIK) forms a coiled coil. His602 is a Fe cation binding site.

The protein belongs to the carotenoid oxygenase family. Requires Fe(2+) as cofactor.

The protein localises to the plastid. It is found in the chloroplast thylakoid membrane. The catalysed reaction is a 9-cis-epoxycarotenoid + O2 = a 12'-apo-carotenal + 2-cis,4-trans-xanthoxin. The enzyme catalyses 9-cis-violaxanthin + O2 = (3S,5R,6S)-5,6-epoxy-3-hydroxy-5,6-dihydro-12'-apo-beta-caroten-12'-al + 2-cis,4-trans-xanthoxin. It catalyses the reaction 9'-cis-neoxanthin + O2 = (3S,5R,6R)-3,5-dihydroxy-6,7-didehydro-5,6-dihydro-12'-apo-beta-caroten-12'-al + 2-cis,4-trans-xanthoxin. Has a 11,12(11',12') 9-cis epoxycarotenoid cleavage activity. Catalyzes the first step of abscisic-acid biosynthesis from carotenoids, in response to water stress. Active on 9-cis-violaxanthin and 9'-cis-neoxanthin, but not on the all-trans isomers of violaxanthin and neoxanthin. This is 9-cis-epoxycarotenoid dioxygenase NCED1, chloroplastic (NCED1) from Phaseolus vulgaris (Kidney bean).